Consider the following 462-residue polypeptide: Na(+)/H(+) antiporter NhaA 2 (462 aa).

The tract at residues 1 to 31 is disordered; it reads MKSSTREQTPVTSPTPHDPTPPTPPRGSTPL. Pro residues predominate over residues 16 to 27; the sequence is PHDPTPPTPPRG. The next 11 helical transmembrane spans lie at 52 to 72, 96 to 116, 134 to 154, 165 to 185, 195 to 215, 218 to 238, 244 to 264, 309 to 329, 337 to 357, 382 to 402, and 408 to 428; these read IGGA…NSPW, LTLG…IAGL, LVPV…YVLV, GWAI…AVIS, FLLT…AIFY, TLAV…GLLV, SWWL…ASGI, FAVP…LSGL, VALG…LGAT, LLGG…FGAG, and HVKV…AVVL.

This sequence belongs to the NhaA Na(+)/H(+) (TC 2.A.33) antiporter family.

It is found in the cell membrane. The enzyme catalyses Na(+)(in) + 2 H(+)(out) = Na(+)(out) + 2 H(+)(in). In terms of biological role, na(+)/H(+) antiporter that extrudes sodium in exchange for external protons. The polypeptide is Na(+)/H(+) antiporter NhaA 2 (Kineococcus radiotolerans (strain ATCC BAA-149 / DSM 14245 / SRS30216)).